The following is a 127-amino-acid chain: uncharacterized protein (127 aa).

3 helical membrane passes run Asn-20–Ser-42, Ile-54–Tyr-76, and Trp-91–Thr-110.

Its subcellular location is the membrane. It localises to the cytoplasm. This is an uncharacterized protein from Schizosaccharomyces pombe (strain 972 / ATCC 24843) (Fission yeast).